A 176-amino-acid polypeptide reads, in one-letter code: Cathelicidin-2 (176 aa).

The N-terminal stretch at 1–29 (METQGASLSLGRWSLWLLLLGLVVPLASA) is a signal peptide. At Gln-30 the chain carries Pyrrolidone carboxylic acid. Positions 30 to 130 (QALSYREAVL…DINCNELQSV (101 aa)) are excised as a propeptide. Cystine bridges form between Cys-85–Cys-96 and Cys-107–Cys-124. Residues 135-176 (PIRRPPIRPPFNPPFRPPVRPPFRPPFRPPFRPPIGPFPGRR) form a disordered region. Over residues 141–176 (IRPPFNPPFRPPVRPPFRPPFRPPFRPPIGPFPGRR) the composition is skewed to pro residues. Pro-173 is subject to Proline amide. A propeptide spans 174-176 (GRR) (removed in mature form).

It belongs to the cathelicidin family. Elastase is responsible for its maturation.

Its subcellular location is the secreted. Functionally, binds to the lipid A moiety of bacterial lipopolysaccharides (LPS), a glycolipid present in the outer membrane of all Gram-negative bacteria. Shows a potent antimicrobial activity against the Gram-negative bacteria E.coli, S.typhimurium and P.aeruginosa. Less active against the Gram-positive bacteria S.aureus, L.monocytogenes and B.subtilis. This is Cathelicidin-2 (CATHL2) from Capra hircus (Goat).